Reading from the N-terminus, the 317-residue chain is Methionyl-tRNA formyltransferase (317 aa).

112–115 (SILP) is a binding site for (6S)-5,6,7,8-tetrahydrofolate.

It belongs to the Fmt family.

The enzyme catalyses L-methionyl-tRNA(fMet) + (6R)-10-formyltetrahydrofolate = N-formyl-L-methionyl-tRNA(fMet) + (6S)-5,6,7,8-tetrahydrofolate + H(+). Its function is as follows. Attaches a formyl group to the free amino group of methionyl-tRNA(fMet). The formyl group appears to play a dual role in the initiator identity of N-formylmethionyl-tRNA by promoting its recognition by IF2 and preventing the misappropriation of this tRNA by the elongation apparatus. The polypeptide is Methionyl-tRNA formyltransferase (Actinobacillus succinogenes (strain ATCC 55618 / DSM 22257 / CCUG 43843 / 130Z)).